The sequence spans 275 residues: Aliphatic sulfonates import ATP-binding protein SsuB 1 (275 aa).

The ABC transporter domain maps to 34 to 260 (ISLTGLEKSF…RHGHPGLCEL (227 aa)). 66–73 (GKSGCGKS) is a binding site for ATP.

Belongs to the ABC transporter superfamily. Aliphatic sulfonates importer (TC 3.A.1.17.2) family. The complex is composed of two ATP-binding proteins (SsuB), two transmembrane proteins (SsuC) and a solute-binding protein (SsuA).

Its subcellular location is the cell inner membrane. The catalysed reaction is ATP + H2O + aliphatic sulfonate-[sulfonate-binding protein]Side 1 = ADP + phosphate + aliphatic sulfonateSide 2 + [sulfonate-binding protein]Side 1.. Functionally, part of the ABC transporter complex SsuABC involved in aliphatic sulfonates import. Responsible for energy coupling to the transport system. This is Aliphatic sulfonates import ATP-binding protein SsuB 1 from Rhizobium johnstonii (strain DSM 114642 / LMG 32736 / 3841) (Rhizobium leguminosarum bv. viciae).